Reading from the N-terminus, the 269-residue chain is Staphylococcal secretory antigen ssaA2 (269 aa).

An N-terminal signal peptide occupies residues 1–27 (MKKIATATIATAGFATIAIASGNQAHA). Tandem repeats lie at residues 83–85 (YNN), 88–90 (YNN), 91–93 (YNN), 97–99 (YNN), 103–105 (YNN), 106–108 (YSN), and 115–117 (YNN). Positions 83–115 (YNNYSYNNYNNGYSYNNYSRYNNYSNNNQSYNY) are 7 X 3 AA repeats of Y-[NS]-N. Residues 148–269 (MAPSSNGRSI…SQAAGYNFIH (122 aa)) form the Peptidase C51 domain.

It is found in the secreted. Functionally, not known; immunogenic protein. The polypeptide is Staphylococcal secretory antigen ssaA2 (ssaA2) (Staphylococcus aureus (strain MRSA252)).